The sequence spans 390 residues: Chorismate synthase (390 aa).

2 residues coordinate NADP(+): Arg39 and Arg45. FMN-binding positions include 132–134, 253–254, Gly298, 313–317, and Arg339; these read RSS, NA, and KPIPT.

This sequence belongs to the chorismate synthase family. In terms of assembly, homotetramer. The cofactor is FMNH2.

The catalysed reaction is 5-O-(1-carboxyvinyl)-3-phosphoshikimate = chorismate + phosphate. It participates in metabolic intermediate biosynthesis; chorismate biosynthesis; chorismate from D-erythrose 4-phosphate and phosphoenolpyruvate: step 7/7. Catalyzes the anti-1,4-elimination of the C-3 phosphate and the C-6 proR hydrogen from 5-enolpyruvylshikimate-3-phosphate (EPSP) to yield chorismate, which is the branch point compound that serves as the starting substrate for the three terminal pathways of aromatic amino acid biosynthesis. This reaction introduces a second double bond into the aromatic ring system. The sequence is that of Chorismate synthase from Bacillus velezensis (strain DSM 23117 / BGSC 10A6 / LMG 26770 / FZB42) (Bacillus amyloliquefaciens subsp. plantarum).